The following is a 39-amino-acid chain: U1-nemetoxin-Csp1c (39 aa).

Intrachain disulfides connect C1-C15, C8-C19, C14-C36, and C25-C32.

Expressed by the venom gland.

The protein resides in the secreted. Causes paralysis to insect larvae (H.virescens). This toxin is active only on insects. The chain is U1-nemetoxin-Csp1c from Calisoga sp. (Spider).